The primary structure comprises 644 residues: Macrolide export ATP-binding/permease protein MacB (644 aa).

Residues Met1 to Ser268 lie on the Cytoplasmic side of the membrane. Residues Ile4 to Arg242 enclose the ABC transporter domain. Residue Gly40 to Ser47 coordinates ATP. Residues Leu269 to Gly289 form a helical membrane-spanning segment. Residues Asn290–Ser523 are Periplasmic-facing. The chain crosses the membrane as a helical span at residues Ile524–Val544. Over Thr545–Val573 the chain is Cytoplasmic. Residues Leu574 to Phe594 form a helical membrane-spanning segment. Residues Asn595 to Thr607 lie on the Periplasmic side of the membrane. A helical membrane pass occupies residues Ala608 to Pro628. The Cytoplasmic segment spans residues Ala629 to Glu644.

The protein belongs to the ABC transporter superfamily. Macrolide exporter (TC 3.A.1.122) family. In terms of assembly, homodimer. Part of the tripartite efflux system MacAB-TdeA, which is composed of an inner membrane transporter, MacB, a periplasmic membrane fusion protein, MacA, and an outer membrane component, TdeA. The complex forms a large protein conduit and can translocate molecules across both the inner and outer membranes. Interacts with MacA.

Its subcellular location is the cell inner membrane. Functionally, part of the tripartite efflux system MacAB-TdeA. MacB is a non-canonical ABC transporter that contains transmembrane domains (TMD), which form a pore in the inner membrane, and an ATP-binding domain (NBD), which is responsible for energy generation. Confers resistance against macrolides. This is Macrolide export ATP-binding/permease protein MacB from Aggregatibacter actinomycetemcomitans (Actinobacillus actinomycetemcomitans).